The primary structure comprises 179 residues: MILYLHGFDATSPGNHEKIRQLQFIDKDVRLLSYSTLHPKHDMQHLLNEVSKQLKLTDDSEPIIIGVGLGGYWAERIGYLNGLKSVLINPNLTPQDNMLGKIDRPEEYSDIANKCVSEFREKNSGKSLVILSRNDDTFDNQVVSDELSRFYEICWDEEQPHKFPVLASQLPRIQAFKKG.

The protein belongs to the UPF0227 family.

The chain is UPF0227 protein Swoo_1808 from Shewanella woodyi (strain ATCC 51908 / MS32).